We begin with the raw amino-acid sequence, 212 residues long: Ras-related protein Rab-15 (212 aa).

Serine 17, glycine 18, valine 19, glycine 20, lysine 21, threonine 22, cysteine 23, serine 35, serine 39, and threonine 40 together coordinate GTP. Threonine 22 serves as a coordination point for Mg(2+). 2 consecutive short sequence motifs (switch) follow at residues 31–45 (NEFH…GVDF) and 63–80 (DTAG…YYRR). 2 residues coordinate Mg(2+): threonine 40 and aspartate 63. Residues glycine 66, asparagine 121, lysine 122, aspartate 124, serine 151, and alanine 152 each coordinate GTP. Residues cysteine 210 and cysteine 212 are each lipidated (S-geranylgeranyl cysteine). The residue at position 212 (cysteine 212) is a Cysteine methyl ester.

This sequence belongs to the small GTPase superfamily. Rab family. In terms of assembly, the GTP bound form of RAB15 interacts with REP15. Interacts (GTP-bound form) with MICAL1, MICAL3, MICALCL, EHBP1 and EHBP1L1. Mg(2+) serves as cofactor. As to expression, expressed predominantly in neural tissues.

It localises to the cell membrane. The enzyme catalyses GTP + H2O = GDP + phosphate + H(+). Regulated by guanine nucleotide exchange factors (GEFs) which promote the exchange of bound GDP for free GTP. Regulated by GTPase activating proteins (GAPs) which increase the GTP hydrolysis activity. Inhibited by GDP dissociation inhibitors (GDIs). Functionally, the small GTPases Rab are key regulators of intracellular membrane trafficking, from the formation of transport vesicles to their fusion with membranes. Rabs cycle between an inactive GDP-bound form and an active GTP-bound form that is able to recruit to membranes different sets of downstream effectors directly responsible for vesicle formation, movement, tethering and fusion. RAB15 may act in concert with RAB3A in regulating aspects of synaptic vesicle membrane flow within the nerve terminal. This chain is Ras-related protein Rab-15, found in Rattus norvegicus (Rat).